A 117-amino-acid polypeptide reads, in one-letter code: Gamma-aminobutyric acid receptor-associated protein (117 aa).

An interaction with beta-tubulin region spans residues 1–22 (MKFVYKEEHPFEKRRSEGEKIR). The interval 36 to 68 (APKARIGDLDKKKYLVPSDLTVGQFYFLIRKRI) is interaction with GABRG2. Residues 36 to 117 (APKARIGDLD…AYSDESVYGL (82 aa)) are interaction with GPHN. Residues 48–50 (KYL) form an interaction with LIR (LC3 nteracting Region) motif of ATG3 region. Gly-116 is lipidated: Phosphatidylethanolamine amidated glycine; alternate. Gly-116 is lipidated: Phosphatidylserine amidated glycine; alternate. Position 117 (Leu-117) is a propeptide, removed in mature form.

The protein belongs to the ATG8 family. In terms of assembly, interacts with GPHN and NSF. Interacts with ATG3, ATG7 and ATG13. Interacts with alpha-tubulin. Interacts with beta-tubulin. Interacts with GABRG2. Interacts with RB1CC1. Interacts with ULK1. Interacts with CALR. Interacts with DDX47. Interacts with TP53INP1 and TP53INP2. Interacts with TBC1D5. Interacts with TBC1D25. Directly interacts with SQSTM1. Interacts with MAPK15. Interacts with TECPR2. Interacts with PCM1. Interacts with TRIM5 and TRIM21. Interacts with MEFV. Interacts with KIF21B. Interacts with WDFY3; this interaction is required for WDFY3 recruitment to MAP1LC3B-positive p62/SQSTM1 bodies. Interacts with FLCN; interaction regulates autophagy. Interacts with UBA5. Interacts with KBTBD6 and KBTBD7; the interaction is direct and required for the ubiquitination of TIAM1. Interacts with reticulophagy regulators RETREG1, RETREG2 and RETREG3. Interacts with IRGM. Interacts with STX17. Interacts with CT55; this interaction may be important for GABARAP protein stability. Interacts with DNM2. Interacts with NCOA4 (via C-terminus). In terms of processing, the precursor molecule is cleaved by ATG4 (ATG4A, ATG4B, ATG4C or ATG4D) to expose the glycine at the C-terminus and form the cytosolic form, GABARAP-I. The processed form is then activated by APG7L/ATG7, transferred to ATG3 and conjugated to phosphatidylethanolamine (PE) phospholipid to form the membrane-bound form, GABARAP-II. During non-canonical autophagy, the processed form is conjugated to phosphatidylserine (PS) phospholipid. ATG4 proteins also mediate the delipidation of PE-conjugated forms. In addition, ATG4B and ATG4D mediate delipidation of ATG8 proteins conjugated to PS during non-canonical autophagy. ATG4B constitutes the major protein for proteolytic activation. ATG4D is the main enzyme for delipidation activity. Expressed in brain (at protein level). Can be found in both somatodendritic and axonal compartment of neurons.

The protein localises to the cytoplasmic vesicle. The protein resides in the autophagosome membrane. It is found in the endomembrane system. Its subcellular location is the cytoplasm. It localises to the cytoskeleton. The protein localises to the golgi apparatus membrane. Its function is as follows. Ubiquitin-like modifier that plays a role in intracellular transport of GABA(A) receptors and its interaction with the cytoskeleton. Involved in autophagy: while LC3s are involved in elongation of the phagophore membrane, the GABARAP/GATE-16 subfamily is essential for a later stage in autophagosome maturation. Through its interaction with the reticulophagy receptor TEX264, participates in the remodeling of subdomains of the endoplasmic reticulum into autophagosomes upon nutrient stress, which then fuse with lysosomes for endoplasmic reticulum turnover. Also required for the local activation of the CUL3(KBTBD6/7) E3 ubiquitin ligase complex, regulating ubiquitination a nd degradation of TIAM1, a guanyl-nucleotide exchange factor (GEF) that activates RAC1 and downstream signal transduction. Thereby, regulates different biological processes including the organization of the cytoskeleton, cell migration and proliferation. Involved in apoptosis. In Rattus norvegicus (Rat), this protein is Gamma-aminobutyric acid receptor-associated protein.